Reading from the N-terminus, the 121-residue chain is Protein yippee-like 5 (121 aa).

One can recognise a Yippee domain in the interval 13–110 (RLFSCANCDT…LERALVRESE (98 aa)). Zn(2+)-binding residues include cysteine 17, cysteine 20, cysteine 73, and cysteine 76. Serine 118 carries the post-translational modification Phosphoserine.

This sequence belongs to the yippee family. In terms of assembly, identified in the CTLH complex that contains GID4, RANBP9 and/or RANBP10, MKLN1, MAEA, RMND5A (or alternatively its paralog RMND5B), GID8, ARMC8, WDR26 and YPEL5. Within this complex, MAEA, RMND5A (or alternatively its paralog RMND5B), GID8, WDR26, and RANBP9 and/or RANBP10 form the catalytic core, while GID4, MKLN1, ARMC8 and YPEL5 have ancillary roles. Interacts with RANBP9 and RANBP10.

Its subcellular location is the nucleus. It localises to the cytoplasm. The protein resides in the cytoskeleton. The protein localises to the microtubule organizing center. It is found in the centrosome. Its subcellular location is the spindle pole. It localises to the midbody. Component of the CTLH E3 ubiquitin-protein ligase complex that selectively accepts ubiquitin from UBE2H and mediates ubiquitination and subsequent proteasomal degradation of the transcription factor HBP1. Required for normal cell proliferation. This is Protein yippee-like 5 (YPEL5) from Bos taurus (Bovine).